The sequence spans 91 residues: Uteroglobin (91 aa).

The N-terminal stretch at methionine 1–alanine 21 is a signal peptide.

The protein belongs to the secretoglobin family. In terms of assembly, antiparallel homodimer; disulfide-linked. Interaction with LMBR1L is controversial. Synthesized in the uterus and lung.

The protein resides in the secreted. Functionally, uteroglobin binds progesterone specifically and with high affinity. It may regulate progesterone concentrations reaching the blastocyst. It is also a potent inhibitor of phospholipase A2. The chain is Uteroglobin (SCGB1A1) from Oryctolagus cuniculus (Rabbit).